The following is a 223-amino-acid chain: Probable Brix domain-containing ribosomal biogenesis protein (223 aa).

A Brix domain is found at 1-196; the sequence is MMLITTSHRP…IWIMEDGRRW (196 aa).

In terms of biological role, probably involved in the biogenesis of the ribosome. The sequence is that of Probable Brix domain-containing ribosomal biogenesis protein from Pyrococcus furiosus (strain ATCC 43587 / DSM 3638 / JCM 8422 / Vc1).